The primary structure comprises 397 residues: F-box protein At3g49450 (397 aa).

In terms of domain architecture, F-box spans 26-75; that stretch reads GENSGTLPTDLMVEILSRVPAKSAARFRCVSNDWNSLLRSPYLTNLFLKR.

This chain is F-box protein At3g49450, found in Arabidopsis thaliana (Mouse-ear cress).